A 448-amino-acid chain; its full sequence is Phosphoglucosamine mutase (448 aa).

Catalysis depends on Ser-102, which acts as the Phosphoserine intermediate. Positions 102, 242, 244, and 246 each coordinate Mg(2+). Ser-102 bears the Phosphoserine mark.

The protein belongs to the phosphohexose mutase family. Requires Mg(2+) as cofactor. In terms of processing, activated by phosphorylation.

The enzyme catalyses alpha-D-glucosamine 1-phosphate = D-glucosamine 6-phosphate. In terms of biological role, catalyzes the conversion of glucosamine-6-phosphate to glucosamine-1-phosphate. This is Phosphoglucosamine mutase from Brevibacillus brevis (strain 47 / JCM 6285 / NBRC 100599).